The sequence spans 189 residues: GTPase NRas (189 aa).

GTP contacts are provided by residues 10-18 and 29-30; these read GAGGVGKSA and VD. Positions 32–40 match the Effector region motif; the sequence is YDPTIEDSY. 57 to 61 lines the GTP pocket; sequence DTAGQ. Residue serine 89 is modified to Phosphoserine. 116-119 lines the GTP pocket; sequence NKCD. A hypervariable region region spans residues 166–185; that stretch reads YRMKKLNSNDDGTQGCMGLP. Lysine 170 participates in a covalent cross-link: Glycyl lysine isopeptide (Lys-Gly) (interchain with G-Cter in ubiquitin). The S-palmitoyl cysteine moiety is linked to residue cysteine 181. Cysteine 186 is lipidated: S-farnesyl cysteine. Residues 187-189 constitute a propeptide, removed in mature form; that stretch reads VVM.

The protein belongs to the small GTPase superfamily. Ras family. As to quaternary structure, interacts (active GTP-bound form preferentially) with RGS14. Interacts (active GTP-bound form) with RASSF7. Interacts (active GTP-bound form) with both SHOC2 and PP1c (all isoforms) to form a tertiary complex; SHOC2 and PP1c preferably bind M-Ras/MRAS, but they also bind K-Ras/KRAS, N-Ras/NRAS and H-Ras/HRAS. Palmitoylated by the ZDHHC9-GOLGA7 complex. Depalmitoylated by ABHD17A, ABHD17B and ABHD17C. A continuous cycle of de- and re-palmitoylation regulates rapid exchange between plasma membrane and Golgi. Post-translationally, acetylation at Lys-104 prevents interaction with guanine nucleotide exchange factors (GEFs). In terms of processing, ubiquitinated by the BCR(LZTR1) E3 ubiquitin ligase complex at Lys-170 in a non-degradative manner, leading to inhibit Ras signaling by decreasing Ras association with membranes. Phosphorylation at Ser-89 enhances NRAS association with its downstream effectors.

The protein localises to the cell membrane. It is found in the golgi apparatus membrane. It catalyses the reaction GTP + H2O = GDP + phosphate + H(+). With respect to regulation, alternates between an inactive form bound to GDP and an active form bound to GTP. Activated by a guanine nucleotide-exchange factor (GEF) and inactivated by a GTPase-activating protein (GAP). Ras proteins bind GDP/GTP and possess intrinsic GTPase activity. The sequence is that of GTPase NRas (NRAS) from Cavia porcellus (Guinea pig).